The chain runs to 157 residues: Small ribosomal subunit protein uS7 (157 aa).

It belongs to the universal ribosomal protein uS7 family. In terms of assembly, part of the 30S ribosomal subunit. Contacts proteins S9 and S11.

Functionally, one of the primary rRNA binding proteins, it binds directly to 16S rRNA where it nucleates assembly of the head domain of the 30S subunit. Is located at the subunit interface close to the decoding center, probably blocks exit of the E-site tRNA. The protein is Small ribosomal subunit protein uS7 of Marinomonas sp. (strain MWYL1).